A 104-amino-acid polypeptide reads, in one-letter code: Large ribosomal subunit protein uL24 (104 aa).

It belongs to the universal ribosomal protein uL24 family. As to quaternary structure, part of the 50S ribosomal subunit.

In terms of biological role, one of two assembly initiator proteins, it binds directly to the 5'-end of the 23S rRNA, where it nucleates assembly of the 50S subunit. Its function is as follows. One of the proteins that surrounds the polypeptide exit tunnel on the outside of the subunit. The polypeptide is Large ribosomal subunit protein uL24 (Bartonella quintana (strain Toulouse) (Rochalimaea quintana)).